The following is a 543-amino-acid chain: CTP synthase (543 aa).

The tract at residues 1 to 265 (MTRYIFVTGG…DDFVVERFGL (265 aa)) is amidoligase domain. Residue serine 13 coordinates CTP. Serine 13 lines the UTP pocket. Residues 14–19 (SLGKGI) and aspartate 71 each bind ATP. Mg(2+) is bound by residues aspartate 71 and glutamate 139. Residues 146–148 (DIE), 186–191 (KTKPTQ), and lysine 222 contribute to the CTP site. UTP contacts are provided by residues 186–191 (KTKPTQ) and lysine 222. One can recognise a Glutamine amidotransferase type-1 domain in the interval 290 to 541 (TIAMVGKYME…VNAALAQKAK (252 aa)). Residue glycine 351 coordinates L-glutamine. The Nucleophile; for glutamine hydrolysis role is filled by cysteine 378. Residues 379–382 (LGMQ), glutamate 402, and arginine 469 each bind L-glutamine. Active-site residues include histidine 514 and glutamate 516.

This sequence belongs to the CTP synthase family. In terms of assembly, homotetramer.

The catalysed reaction is UTP + L-glutamine + ATP + H2O = CTP + L-glutamate + ADP + phosphate + 2 H(+). The enzyme catalyses L-glutamine + H2O = L-glutamate + NH4(+). It catalyses the reaction UTP + NH4(+) + ATP = CTP + ADP + phosphate + 2 H(+). The protein operates within pyrimidine metabolism; CTP biosynthesis via de novo pathway; CTP from UDP: step 2/2. Allosterically activated by GTP, when glutamine is the substrate; GTP has no effect on the reaction when ammonia is the substrate. The allosteric effector GTP functions by stabilizing the protein conformation that binds the tetrahedral intermediate(s) formed during glutamine hydrolysis. Inhibited by the product CTP, via allosteric rather than competitive inhibition. Functionally, catalyzes the ATP-dependent amination of UTP to CTP with either L-glutamine or ammonia as the source of nitrogen. Regulates intracellular CTP levels through interactions with the four ribonucleotide triphosphates. This chain is CTP synthase, found in Ectopseudomonas mendocina (strain ymp) (Pseudomonas mendocina).